The primary structure comprises 1914 residues: MGDVKLVASSHISKTSLSVDPSRVDSMPLTEAPAFILPPRNLCIKEGATAKFEGRVRGYPEPQVTWHRNGQPITSGGRFLLDCGIRGTFSLVIHAVHEEDRGKYTCEATNGSGARQVTVELTVEGSFAKQLGQPVVSKTLGDRFSAPAVETRPSIWGECPPKFATKLGRVVVKEGQMGRFSCKITGRPQPQVTWLKGNVPLQPSARVSVSEKNGMQVLEIHGVNQDDVGVYTCLVVNGSGKASMSAELSIQGLDSANRSFVRETKATNSDVRKEVTNVISKESKLDSLEAAAKSKNCSSPQRGGSPPWAANSQPQPPRESKLESCKDSPRTAPQTPVLQKTSSSITLQAARVQPEPRAPGLGVLSPSGEERKRPAPPRPATFPTRQPGLGSQDVVSKAANRRIPMEGQRDSAFPKFESKPQSQEVKENQTVKFRCEVSGIPKPEVAWFLEGTPVRRQEGSIEVYEDAGSHYLCLLKARTRDSGTYSCTASNAQGQLSCSWTLQVERLAVMEVAPSFSSVLKDCAVIEGQDFVLQCSVRGTPVPRITWLLNGQPIQYARSTCEAGVAELHIQDALPEDHGTYTCLAENALGQVSCSAWVTVHEKKSSRKSEYLLPVAPSKPTAPIFLQGLSDLKVMDGSQVTMTVQVSGNPPPEVIWLHNGNEIQESEDFHFEQRGTQHSLCIQEVFPEDTGTYTCEAWNSAGEVRTQAVLTVQEPHDGTQPWFISKPRSVTASLGQSVLISCAIAGDPFPTVHWLRDGKALCKDTGHFEVLQNEDVFTLVLKKVQPWHAGQYEILLKNRVGECSCQVSLMLQNSSARALPRGREPASCEDLCGGGVGADGGGSDRYGSLRPGWPARGQGWLEEEDGEDVRGVLKRRVETRQHTEEAIRQQEVEQLDFRDLLGKKVSTKTLSEDDLKEIPAEQMDFRANLQRQVKPKTVSEEERKVHSPQQVDFRSVLAKKGTSKTPVPEKVPPPKPATPDFRSVLGGKKKLPAENGSSSAETLNAKAVESSKPLSNAQPSGPLKPVGNAKPAETLKPMGNAKPAETLKPMGNAKPDENLKSASKEELKKDVKNDVNCKRGHAGTTDNEKRSESQGTAPAFKQKLQDVHVAEGKKLLLQCQVSSDPPATIIWTLNGKTLKTTKFIILSQEGSLCSVSIEKALPEDRGLYKCVAKNDAGQAECSCQVTVDDAPASENTKAPEMKSRRPKSSLPPVLGTESDATVKKKPAPKTPPKAAMPPQIIQFPEDQKVRAGESVELFGKVTGTQPITCTWMKFRKQIQESEHMKVENSENGSKLTILAARQEHCGCYTLLVENKLGSRQAQVNLTVVDKPDPPAGTPCASDIRSSSLTLSWYGSSYDGGSAVQSYSIEIWDSANKTWKELATCRSTSFNVQDLLPDHEYKFRVRAINVYGTSEPSQESELTTVGEKPEEPKDEVEVSDDDEKEPEVDYRTVTINTEQKVSDFYDIEERLGSGKFGQVFRLVEKKTRKVWAGKFFKAYSAKEKENIRQEISIMNCLHHPKLVQCVDAFEEKANIVMVLEIVSGGELFERIIDEDFELTERECIKYMRQISEGVEYIHKQGIVHLDLKPENIMCVNKTGTRIKLIDFGLARRLENAGSLKVLFGTPEFVAPEVINYEPIGYATDMWSIGVICYILVSGLSPFMGDNDNETLANVTSATWDFDDEAFDEISDDAKDFISNLLKKDMKNRLDCTQCLQHPWLMKDTKNMEAKKLSKDRMKKYMARRKWQKTGNAVRAIGRLSSMAMISGLSGRKSSTGSPTSPLNAEKLESEEDVSQAFLEAVAEEKPHVKPYFSKTIRDLEVVEGSAARFDCKIEGYPDPEVVWFKDDQSIRESRHFQIDYDEDGNCSLIISDVCGDDDAKYTCKAVNSLGEATCTAELIVETMEEGEGEGEEEEE.

G2 is subject to N-acetylalanine. Ig-like C2-type domains lie at 33 to 122 (PAFI…VELT) and 161 to 249 (PKFA…AELS). Residues C182 and C233 are joined by a disulfide bond. Y231 bears the Phosphotyrosine; by ABL1 mark. The tract at residues 286–393 (DSLEAAAKSK…TRQPGLGSQD (108 aa)) is disordered. At S305 the chain carries Phosphoserine. Over residues 318–329 (RESKLESCKDSP) the composition is skewed to basic and acidic residues. Residues 331–347 (TAPQTPVLQKTSSSITL) show a composition bias toward polar residues. S343 and S365 each carry phosphoserine. 2 consecutive Ig-like C2-type domains span residues 414–503 (PKFE…WTLQ) and 514–599 (PSFS…AWVT). 2 cysteine pairs are disulfide-bonded: C435–C487 and C535–C583. Y464 is modified (phosphotyrosine; by ABL1 and SRC). Phosphotyrosine; by SRC is present on Y471. Y556 is subject to Phosphotyrosine; by ABL1. K608 bears the N6-acetyllysine mark. The residue at position 611 (Y611) is a Phosphotyrosine; by ABL1. Ig-like C2-type domains follow at residues 620 to 711 (PTAP…AVLT) and 721 to 821 (PWFI…ALPR). A disulfide bridge links C742 with C805. Residues Y792 and Y846 each carry the phosphotyrosine; by ABL1 modification. 4 consecutive repeat copies span residues 868 to 895 (DVRG…VEQL), 896 to 923 (DFRD…AEQM), 924 to 951 (DFRA…PQQV), and 952 to 979 (DFRS…PATP). A 5 X 28 AA approximate tandem repeats region spans residues 868-998 (DVRGVLKRRV…KKLPAENGSS (131 aa)). Positions 923 to 963 (MDFRANLQRQVKPKTVSEEERKVHSPQQVDFRSVLAKKGTS) are actin-binding (calcium/calmodulin-sensitive). Residues 932–1098 (QVKPKTVSEE…KRSESQGTAP (167 aa)) form a disordered region. S947 is subject to Phosphoserine. The segment at 948 to 963 (PQQVDFRSVLAKKGTS) is calmodulin-binding. One copy of the 1-5; truncated repeat lies at 980 to 998 (DFRSVLGGKKKLPAENGSS). Residues 999-1003 (SAETL) form a 2-1; truncated repeat. The tract at residues 999 to 1063 (SAETLNAKAV…KPDENLKSAS (65 aa)) is 6 X 12 AA approximate tandem repeats. 5 consecutive repeat copies span residues 1004 to 1015 (NAKAVESSKPLS), 1016 to 1027 (NAQPSGPLKPVG), 1028 to 1039 (NAKPAETLKPMG), 1040 to 1051 (NAKPAETLKPMG), and 1052 to 1063 (NAKPDENLKSAS). The segment covering 1054 to 1077 (KPDENLKSASKEELKKDVKNDVNC) has biased composition (basic and acidic residues). Positions 1061–1460 (SASKEELKKD…TVTINTEQKV (400 aa)) are actin-binding (calcium/calmodulin-insensitive). In terms of domain architecture, Ig-like C2-type 7 spans 1098–1186 (PAFKQKLQDV…GQAECSCQVT (89 aa)). C1119 and C1170 are disulfide-bonded. The tract at residues 1192-1237 (ASENTKAPEMKSRRPKSSLPPVLGTESDATVKKKPAPKTPPKAAMP) is disordered. An Ig-like C2-type 8 domain is found at 1238-1326 (PQIIQFPEDQ…GSRQAQVNLT (89 aa)). In terms of domain architecture, Fibronectin type-III spans 1334–1426 (PAGTPCASDI…QESELTTVGE (93 aa)). A compositionally biased stretch (polar residues) spans 1413–1422 (SEPSQESELT). Positions 1413 to 1446 (SEPSQESELTTVGEKPEEPKDEVEVSDDDEKEPE) are disordered. Positions 1431 to 1445 (PKDEVEVSDDDEKEP) are enriched in acidic residues. S1438 is modified (phosphoserine). A Phosphotyrosine; by ABL1 modification is found at Y1449. Residues 1464 to 1719 (YDIEERLGSG…CTQCLQHPWL (256 aa)) enclose the Protein kinase domain. Residues 1470–1478 (LGSGKFGQV) and K1493 each bind ATP. Residue Y1575 is modified to Phosphotyrosine; by ABL1. Residue D1585 is the Proton acceptor of the active site. Phosphotyrosine; by ABL1 is present on Y1635. A calmodulin-binding region spans residues 1711 to 1774 (TQCLQHPWLM…SGLSGRKSST (64 aa)). 5 positions are modified to phosphoserine: S1759, S1760, S1772, S1773, and S1776. The tract at residues 1767 to 1787 (LSGRKSSTGSPTSPLNAEKLE) is disordered. The span at 1770–1781 (RKSSTGSPTSPL) shows a compositional bias: polar residues. T1778 carries the phosphothreonine modification. Phosphoserine is present on S1779. The 90-residue stretch at 1809–1898 (PYFSKTIRDL…GEATCTAELI (90 aa)) folds into the Ig-like C2-type 9 domain. An intrachain disulfide couples C1830 to C1882.

It belongs to the protein kinase superfamily. CAMK Ser/Thr protein kinase family. In terms of assembly, all isoforms including Telokin bind calmodulin. Interacts with SVIL. Interacts with CTTN; this interaction is reduced during thrombin-induced endothelial cell (EC) contraction but is promoted by the barrier-protective agonist sphingosine 1-phosphate (S1P) within lamellipodia. A complex made of ABL1, CTTN and MYLK regulates cortical actin-based cytoskeletal rearrangement critical to sphingosine 1-phosphate (S1P)-mediated endothelial cell (EC) barrier enhancement. Binds to NAA10/ARD1 and PTK2B/PYK2. Mg(2+) serves as cofactor. It depends on Ca(2+) as a cofactor. Post-translationally, can probably be down-regulated by phosphorylation. Tyrosine phosphorylation by ABL1 increases kinase activity, reverses MLCK-mediated inhibition of Arp2/3-mediated actin polymerization, and enhances CTTN-binding. Phosphorylation by SRC at Tyr-464 and Tyr-471 promotes CTTN binding. In terms of processing, the C-terminus is deglutamylated by AGTPBP1/CCP1, AGBL1/CCP4 and AGBL4/CCP6, leading to the formation of Myosin light chain kinase, smooth muscle, deglutamylated form. The consequences of C-terminal deglutamylation are unknown. Acetylated at Lys-608 by NAA10/ARD1 via a calcium-dependent signaling; this acetylation represses kinase activity and reduces tumor cell migration. As to expression, smooth muscle and non-muscle isozymes are expressed in a wide variety of adult and fetal tissues and in cultured endothelium with qualitative expression appearing to be neither tissue- nor development-specific. Non-muscle isoform 2 is the dominant splice variant expressed in various tissues. Telokin has been found in a wide variety of adult and fetal tissues. Accumulates in well differentiated enterocytes of the intestinal epithelium in response to tumor necrosis factor (TNF).

Its subcellular location is the cytoplasm. It is found in the cell projection. The protein resides in the lamellipodium. The protein localises to the cleavage furrow. It localises to the cytoskeleton. Its subcellular location is the stress fiber. The catalysed reaction is L-seryl-[myosin light chain] + ATP = O-phospho-L-seryl-[myosin light chain] + ADP + H(+). It catalyses the reaction L-threonyl-[myosin light chain] + ATP = O-phospho-L-threonyl-[myosin light chain] + ADP + H(+). Its activity is regulated as follows. Isoform 1 is activated by phosphorylation on Tyr-464 and Tyr-471. Isoforms which lack these tyrosine residues are not regulated in this way. All catalytically active isoforms require binding to calcium and calmodulin for activation. Repressed by organometallic pyridylnaphthalimide complexes, wortmannin, ML-7 (a synthetic naphthalenesulphonyl derivative that inhibits the binding of ATP to MLCK) and ML-9. Its function is as follows. Calcium/calmodulin-dependent myosin light chain kinase implicated in smooth muscle contraction via phosphorylation of myosin light chains (MLC). Also regulates actin-myosin interaction through a non-kinase activity. Phosphorylates PTK2B/PYK2 and myosin light-chains. Involved in the inflammatory response (e.g. apoptosis, vascular permeability, leukocyte diapedesis), cell motility and morphology, airway hyperreactivity and other activities relevant to asthma. Required for tonic airway smooth muscle contraction that is necessary for physiological and asthmatic airway resistance. Necessary for gastrointestinal motility. Implicated in the regulation of endothelial as well as vascular permeability, probably via the regulation of cytoskeletal rearrangements. In the nervous system it has been shown to control the growth initiation of astrocytic processes in culture and to participate in transmitter release at synapses formed between cultured sympathetic ganglion cells. Critical participant in signaling sequences that result in fibroblast apoptosis. Plays a role in the regulation of epithelial cell survival. Required for epithelial wound healing, especially during actomyosin ring contraction during purse-string wound closure. Mediates RhoA-dependent membrane blebbing. Triggers TRPC5 channel activity in a calcium-dependent signaling, by inducing its subcellular localization at the plasma membrane. Promotes cell migration (including tumor cells) and tumor metastasis. PTK2B/PYK2 activation by phosphorylation mediates ITGB2 activation and is thus essential to trigger neutrophil transmigration during acute lung injury (ALI). May regulate optic nerve head astrocyte migration. Probably involved in mitotic cytoskeletal regulation. Regulates tight junction probably by modulating ZO-1 exchange in the perijunctional actomyosin ring. Mediates burn-induced microvascular barrier injury; triggers endothelial contraction in the development of microvascular hyperpermeability by phosphorylating MLC. Essential for intestinal barrier dysfunction. Mediates Giardia spp.-mediated reduced epithelial barrier function during giardiasis intestinal infection via reorganization of cytoskeletal F-actin and tight junctional ZO-1. Necessary for hypotonicity-induced Ca(2+) entry and subsequent activation of volume-sensitive organic osmolyte/anion channels (VSOAC) in cervical cancer cells. Responsible for high proliferative ability of breast cancer cells through anti-apoptosis. The chain is Myosin light chain kinase, smooth muscle from Homo sapiens (Human).